We begin with the raw amino-acid sequence, 241 residues long: MADS-box transcription factor 57 (241 aa).

The region spanning Met-1–Asn-61 is the MADS-box domain. The K-box domain occupies Ile-85–Glu-178. The interval Leu-216–Pro-241 is disordered.

Interacts with TB1. In terms of tissue distribution, expressed in seedling roots and shoots. Highly expressed in young leaves.

It is found in the nucleus. Functionally, transcriptional factor that targets the CArG motif 5'-C(A/T)TTAAAAAG-3' in the promoter of D14. Directly suppresses D14 expression to control the outgrowth of axillary buds. The chain is MADS-box transcription factor 57 from Oryza sativa subsp. japonica (Rice).